Here is a 901-residue protein sequence, read N- to C-terminus: HTH-type transcriptional regulator MalT (901 aa).

An ATP-binding site is contributed by 39-46 (SPAGYGKT). The HTH luxR-type domain occupies 829–894 (ELIRTSPLTQ…AAVQHAQKLL (66 aa)). The H-T-H motif DNA-binding region spans 853–872 (NEQIAGELEVAATTIKTHIR).

The protein belongs to the MalT family. Monomer in solution. Oligomerizes to an active state in the presence of the positive effectors ATP and maltotriose.

With respect to regulation, activated by ATP and maltotriose, which are both required for DNA binding. In terms of biological role, positively regulates the transcription of the maltose regulon whose gene products are responsible for uptake and catabolism of malto-oligosaccharides. Specifically binds to the promoter region of its target genes, recognizing a short DNA motif called the MalT box. The sequence is that of HTH-type transcriptional regulator MalT from Escherichia coli O6:H1 (strain CFT073 / ATCC 700928 / UPEC).